Consider the following 286-residue polypeptide: ATP synthase gamma chain (286 aa).

It belongs to the ATPase gamma chain family. F-type ATPases have 2 components, CF(1) - the catalytic core - and CF(0) - the membrane proton channel. CF(1) has five subunits: alpha(3), beta(3), gamma(1), delta(1), epsilon(1). CF(0) has three main subunits: a, b and c.

It localises to the cell inner membrane. Produces ATP from ADP in the presence of a proton gradient across the membrane. The gamma chain is believed to be important in regulating ATPase activity and the flow of protons through the CF(0) complex. This is ATP synthase gamma chain from Shewanella baltica (strain OS223).